Consider the following 526-residue polypeptide: Non-reducing end alpha-L-arabinofuranosidase BoGH43A (526 aa).

Residues Met1 to Ala20 form the signal peptide. Asp34 (proton acceptor) is an active-site residue. Glu189 serves as the catalytic Proton donor.

This sequence belongs to the glycosyl hydrolase 43 family.

The protein localises to the periplasm. The enzyme catalyses Hydrolysis of terminal non-reducing alpha-L-arabinofuranoside residues in alpha-L-arabinosides.. The protein operates within glucan metabolism; xyloglucan degradation. In terms of biological role, alpha-L-arabinofuranosidase involved in xyloglucan degradation by mediating the cleavage of terminal non-reducing alpha-L-arabinofuranoside residues in xyloglucan branches, converting the 'S' units to 'X' units. In Bacteroides ovatus (strain ATCC 8483 / DSM 1896 / JCM 5824 / BCRC 10623 / CCUG 4943 / NCTC 11153), this protein is Non-reducing end alpha-L-arabinofuranosidase BoGH43A.